A 146-amino-acid polypeptide reads, in one-letter code: Large ribosomal subunit protein bL19 (146 aa).

It belongs to the bacterial ribosomal protein bL19 family.

This protein is located at the 30S-50S ribosomal subunit interface and may play a role in the structure and function of the aminoacyl-tRNA binding site. The polypeptide is Large ribosomal subunit protein bL19 (Bartonella bacilliformis (strain ATCC 35685 / KC583 / Herrer 020/F12,63)).